A 679-amino-acid chain; its full sequence is Shutoff protein (679 aa).

The tract at residues 178–232 is binding to host EIF4G; that stretch reads LFDYLIGESQDPNDLDSEYKLAFTDEDLPQEGQAEKTKQRETLGAVATFGAVLLS. An RRM domain is found at 235 to 353; sequence RLFTHPVVIK…ELAGANYAEA (119 aa). Residues Tyr252 and Tyr564 each carry the phosphotyrosine; by host modification. The disordered stretch occupies residues 552–679; sequence REKSILKRGG…SLQGTRRESS (128 aa). The segment covering 661–679 has biased composition (basic and acidic residues); sequence PRQETAEKESLQGTRRESS.

This sequence belongs to the adenoviridae shutoff protein family. In terms of assembly, monomer. Interacts with hexon protein; this interaction allows chaperoning and trimerization of hexon proteins. Interacts (via N-terminus) with host initiation factor EIF4G (via C-terminus). Interacts (via RRM domain) with viral mRNAs that contain the tripartite leader; this interaction allows ribosome shunting and expression of viral late mRNAs. Post-translationally, might be cleaved by the viral protease. In terms of processing, phosphorylated. Tyrosine phosphorylation enhances preferential binding to tripartite leader mRNAs and allows ribosome shunting. Methylated. Asymmetric dimethylation by host PRMT1 of the Arg/Gly-rich region may regulate shutoff protein binding to hexon and promote the capsid assembly in the nucleus.

The protein resides in the host cytoplasm. In terms of biological role, protein that inhibits host translation while promoting late viral translation by ribosome shunting. Blocks host cap-dependent translation by binding to eIF4G, displacing MKNK1 from cap initiation complexes and preventing EIF4E phosphorylation. Binds to the tripartite leader sequence of viral late mRNAs and recruits host eIF4G, PABPC1/poly-A binding protein and 40S ribosomes subunits on viral mRNAs, allowing ribosome shunting and efficient translation of late viral mRNAs even though conventional translation via ribosome scanning from the cap has been shut off in the host cell. During assembly, acts as a chaperone protein that helps hexon proteins assembly into trimers. The sequence is that of Shutoff protein from Snake adenovirus serotype 1 (SnAdV-1).